We begin with the raw amino-acid sequence, 80 residues long: Phycocyanin-645 alpha-1 chain (80 aa).

Arg16 contributes to the (2R,3E)-phycocyanobilin binding site. Mesobiliverdin-binding residues include Cys18, Gln24, Tyr25, and Lys40. 15,16-dihydrobiliverdin is bound by residues Pro71 and Ile73.

Belongs to the phycoerythrin family. As to quaternary structure, heterotetramer of 2 different alpha chains and 2 identical beta chains which form 2 alpha-beta heterodimers within the heterotetramer. Contains one phycocyanobilin chromophore, one mesobiliverdin chromophore and one 15,16-dihydrobiliverdin chromophore with binding mediated by both the alpha and beta subunits.

It localises to the plastid. The protein localises to the chloroplast thylakoid membrane. In terms of biological role, light-harvesting photosynthetic tetrapyrrole chromophore-protein from the phycobiliprotein complex. This is Phycocyanin-645 alpha-1 chain from Chroomonas sp.